The primary structure comprises 258 residues: Pimeloyl-[acyl-carrier protein] methyl ester esterase (258 aa).

The AB hydrolase-1 domain occupies 17 to 241 (VYLIHGWGAN…KAAHAPFLSH (225 aa)). Substrate-binding positions include W23, 83–84 (SL), and 145–149 (FLQLQ). S83 acts as the Nucleophile in catalysis. Catalysis depends on residues D207 and H235. H235 is a binding site for substrate.

It belongs to the AB hydrolase superfamily. Carboxylesterase BioH family. As to quaternary structure, monomer.

The protein localises to the cytoplasm. It catalyses the reaction 6-carboxyhexanoyl-[ACP] methyl ester + H2O = 6-carboxyhexanoyl-[ACP] + methanol + H(+). It functions in the pathway cofactor biosynthesis; biotin biosynthesis. In terms of biological role, the physiological role of BioH is to remove the methyl group introduced by BioC when the pimeloyl moiety is complete. It allows to synthesize pimeloyl-ACP via the fatty acid synthetic pathway through the hydrolysis of the ester bonds of pimeloyl-ACP esters. This chain is Pimeloyl-[acyl-carrier protein] methyl ester esterase, found in Neisseria meningitidis serogroup B (strain ATCC BAA-335 / MC58).